Here is a 929-residue protein sequence, read N- to C-terminus: Bifunctional glutamine synthetase adenylyltransferase/adenylyl-removing enzyme (929 aa).

Residues 1-422 (MTTPISTSRA…TRHFEQIFAV (422 aa)) are adenylyl removase. Residues 429–929 (LGTFARIRPE…FQLWEDVFGT (501 aa)) are adenylyl transferase.

The protein belongs to the GlnE family. Mg(2+) is required as a cofactor.

The enzyme catalyses [glutamine synthetase]-O(4)-(5'-adenylyl)-L-tyrosine + phosphate = [glutamine synthetase]-L-tyrosine + ADP. The catalysed reaction is [glutamine synthetase]-L-tyrosine + ATP = [glutamine synthetase]-O(4)-(5'-adenylyl)-L-tyrosine + diphosphate. In terms of biological role, involved in the regulation of glutamine synthetase GlnA, a key enzyme in the process to assimilate ammonia. When cellular nitrogen levels are high, the C-terminal adenylyl transferase (AT) inactivates GlnA by covalent transfer of an adenylyl group from ATP to specific tyrosine residue of GlnA, thus reducing its activity. Conversely, when nitrogen levels are low, the N-terminal adenylyl removase (AR) activates GlnA by removing the adenylyl group by phosphorolysis, increasing its activity. The regulatory region of GlnE binds the signal transduction protein PII (GlnB) which indicates the nitrogen status of the cell. The chain is Bifunctional glutamine synthetase adenylyltransferase/adenylyl-removing enzyme from Nitrosomonas eutropha (strain DSM 101675 / C91 / Nm57).